The sequence spans 77 residues: Small ribosomal subunit protein bS21 (77 aa).

Belongs to the bacterial ribosomal protein bS21 family.

This chain is Small ribosomal subunit protein bS21, found in Bartonella tribocorum (strain CIP 105476 / IBS 506).